The following is a 312-amino-acid chain: 2-dehydropantoate 2-reductase (312 aa).

Residues 7 to 12 (GAGAMG), Asn105, and Ala131 contribute to the NADP(+) site. Substrate is bound at residue Asn105. The active-site Proton donor is the Lys187. Substrate is bound by residues Asn191, Asn195, and Ser260. Glu273 contacts NADP(+).

It belongs to the ketopantoate reductase family.

It localises to the cytoplasm. It carries out the reaction (R)-pantoate + NADP(+) = 2-dehydropantoate + NADPH + H(+). It participates in cofactor biosynthesis; (R)-pantothenate biosynthesis; (R)-pantoate from 3-methyl-2-oxobutanoate: step 2/2. Its function is as follows. Catalyzes the NADPH-dependent reduction of ketopantoate into pantoic acid. The polypeptide is 2-dehydropantoate 2-reductase (Lactococcus lactis subsp. lactis (strain IL1403) (Streptococcus lactis)).